The following is a 275-amino-acid chain: MALSLLSVFIFFHVFTNVVFAASNEESNALVSLPTPTLPSPSPATKPPSPALKPPTPSYKPPTLPTTPIKPPTTKPPVKPPTIPVTPVKPPVSTPPIKLPPVQPPTYKPPTPTVKPPSVQPPTYKPPTPTVKPPTTSPVKPPTTPPVQSPPVQPPTYKPPTSPVKPPTTTPPVKPPTTTPPVQPPTYNPPTTPVKPPTAPPVKPPTPPPVRTRIDCVPLCGTRCGQHSRKNVCMRACVTCCYRCKCVPPGTYGNKEKCGSCYANMKTRGGKSKCP.

The first 21 residues, 1–21 (MALSLLSVFIFFHVFTNVVFA), serve as a signal peptide directing secretion. Residues 34 to 207 (PTPTLPSPSP…TAPPVKPPTP (174 aa)) are disordered. Positions 36-207 (PTLPSPSPAT…TAPPVKPPTP (172 aa)) are enriched in pro residues.

The protein belongs to the GASA family. In terms of processing, six disulfide bonds may be present. Expressed in flower abscission zone, style, stamen filaments and lateral roots.

It localises to the secreted. Functionally, gibberellin-regulated protein that may function in hormonal controlled steps of development such as seed germination, flowering and seed maturation. The protein is Gibberellin-regulated protein 14 (GASA14) of Arabidopsis thaliana (Mouse-ear cress).